The sequence spans 356 residues: Red-sensitive opsin-2 (356 aa).

Residues 1–48 (MAEWANAAFAARRRGDETTRDNAFSYTNSNNTRDPFEGPNYHIAPRWV) lie on the Extracellular side of the membrane. The N-linked (GlcNAc...) asparagine glycan is linked to Asn-30. Residues 49 to 73 (YNVATVWMFFVVVASTFTNGLVLVA) form a helical membrane-spanning segment. Residues 74 to 85 (TAKFKKLRHPLN) are Cytoplasmic-facing. The chain crosses the membrane as a helical span at residues 86–111 (WILVNLAIADLGETLFASTISVINQV). The Extracellular segment spans residues 112-125 (FGYFILGHPMCIFE). Residues Cys-122 and Cys-199 are joined by a disulfide bond. The helical transmembrane segment at 126–145 (GYTVSVCGIAGLWSLTVISW) threads the bilayer. Residues 146 to 164 (ERWVVVCKPFGNVKFDGKW) are Cytoplasmic-facing. Residues 165–188 (ASAGIIFSWVWAAVWCAPPIFGWS) traverse the membrane as a helical segment. The Extracellular segment spans residues 189–214 (RYWPHGLKTSCGPDVFGGNEDPGVQS). The chain crosses the membrane as a helical span at residues 215–242 (YMLVLMITCCILPLAIIILCYIAVFLAI). Over 243-264 (HAVAQQQKDSESTQKAEKEVSR) the chain is Cytoplasmic. The chain crosses the membrane as a helical span at residues 265–288 (MVVVMILAFCLCWGPYTAFACFAA). The Extracellular segment spans residues 289-296 (ANPGYAFH). The chain crosses the membrane as a helical span at residues 297 to 321 (PLAAAMPAYFAKSATIYNPIIYVFM). At Lys-308 the chain carries N6-(retinylidene)lysine. The Cytoplasmic segment spans residues 322 to 356 (NRQFRVCIMQLFGKKVDDGSEVSTSKTEVSSVAPA).

Belongs to the G-protein coupled receptor 1 family. Opsin subfamily. Post-translationally, phosphorylated on some or all of the serine and threonine residues present in the C-terminal region.

It localises to the membrane. Its function is as follows. Visual pigments are the light-absorbing molecules that mediate vision. They consist of an apoprotein, opsin, covalently linked to cis-retinal. The chain is Red-sensitive opsin-2 (opn1lw2) from Danio rerio (Zebrafish).